The following is a 161-amino-acid chain: Nucleotide-binding protein Bphy_0527 (161 aa).

Belongs to the YajQ family.

Nucleotide-binding protein. This is Nucleotide-binding protein Bphy_0527 from Paraburkholderia phymatum (strain DSM 17167 / CIP 108236 / LMG 21445 / STM815) (Burkholderia phymatum).